A 259-amino-acid chain; its full sequence is Glutamate racemase (259 aa).

Residues 7-8 (DS) and 39-40 (YG) each bind substrate. Residue C70 is the Proton donor/acceptor of the active site. 71–72 (NS) provides a ligand contact to substrate. C180 functions as the Proton donor/acceptor in the catalytic mechanism. Residue 181–182 (TH) participates in substrate binding.

This sequence belongs to the aspartate/glutamate racemases family.

It catalyses the reaction L-glutamate = D-glutamate. The protein operates within cell wall biogenesis; peptidoglycan biosynthesis. Functionally, provides the (R)-glutamate required for cell wall biosynthesis. This chain is Glutamate racemase, found in Hydrogenobaculum sp. (strain Y04AAS1).